We begin with the raw amino-acid sequence, 1043 residues long: Integrator complex subunit 3 (1043 aa).

Met1 is modified (N-acetylmethionine). Ser502, Ser537, and Ser995 each carry phosphoserine. The disordered stretch occupies residues 977-1043; that stretch reads YEDSSTKPPK…GSSAVGSDSD (67 aa). The span at 1008-1022 shows a compositional bias: acidic residues; that stretch reads AEEESGSSSASEEED.

This sequence belongs to the Integrator subunit 3 family. In terms of assembly, component of the Integrator complex, composed of core subunits INTS1, INTS2, INTS3, INTS4, INTS5, INTS6, INTS7, INTS8, INTS9/RC74, INTS10, INTS11/CPSF3L, INTS12, INTS13, INTS14 and INTS15. The core complex associates with protein phosphatase 2A subunits PPP2CA and PPP2R1A, to form the Integrator-PP2A (INTAC) complex. Component of the SOSS complex, composed of SOSS-B (SOSS-B1/NABP2 or SOSS-B2/NABP1), SOSS-A/INTS3 and SOSS-C/INIP. SOSS complexes containing SOSS-B1/NABP2 are more abundant than complexes containing SOSS-B2/NABP1. Interacts with SOSS-B1/NABP2, SOSS-B2/NABP1 and SOSS-C/INIP; the interaction is direct. Interacts with NBN/NBS1.

The protein localises to the nucleus. It localises to the cytoplasm. Component of the integrator complex, a multiprotein complex that terminates RNA polymerase II (Pol II) transcription in the promoter-proximal region of genes. The integrator complex provides a quality checkpoint during transcription elongation by driving premature transcription termination of transcripts that are unfavorably configured for transcriptional elongation: the complex terminates transcription by (1) catalyzing dephosphorylation of the C-terminal domain (CTD) of Pol II subunit POLR2A/RPB1 and SUPT5H/SPT5, (2) degrading the exiting nascent RNA transcript via endonuclease activity and (3) promoting the release of Pol II from bound DNA. The integrator complex is also involved in terminating the synthesis of non-coding Pol II transcripts, such as enhancer RNAs (eRNAs), small nuclear RNAs (snRNAs), telomerase RNAs and long non-coding RNAs (lncRNAs). Within the integrator complex, INTS3 is involved in the post-termination step: INTS3 binds INTS7 in the open conformation of integrator complex and prevents the rebinding of Pol II to the integrator after termination cycle. Mediates recruitment of cytoplasmic dynein to the nuclear envelope, probably as component of the integrator complex. Its function is as follows. Component of the SOSS complex, a multiprotein complex that functions downstream of the MRN complex to promote DNA repair and G2/M checkpoint. The SOSS complex associates with single-stranded DNA at DNA lesions and influences diverse endpoints in the cellular DNA damage response including cell-cycle checkpoint activation, recombinational repair and maintenance of genomic stability. The SOSS complex is required for efficient homologous recombination-dependent repair of double-strand breaks (DSBs) and ATM-dependent signaling pathways. In the SOSS complex, it is required for the assembly of the complex and for stabilization of the complex at DNA damage sites. The protein is Integrator complex subunit 3 (INTS3) of Pongo abelii (Sumatran orangutan).